Here is a 666-residue protein sequence, read N- to C-terminus: tRNA 5-methylaminomethyl-2-thiouridine biosynthesis bifunctional protein MnmC (666 aa).

A tRNA (mnm(5)s(2)U34)-methyltransferase region spans residues 1 to 253 (MSSPFVPIIT…KRHMICAHYE (253 aa)). The tract at residues 283-666 (VGGGLAGCFI…FLRKKIIQGP (384 aa)) is FAD-dependent cmnm(5)s(2)U34 oxidoreductase.

It in the N-terminal section; belongs to the methyltransferase superfamily. tRNA (mnm(5)s(2)U34)-methyltransferase family. The protein in the C-terminal section; belongs to the DAO family. FAD serves as cofactor.

It is found in the cytoplasm. It carries out the reaction 5-aminomethyl-2-thiouridine(34) in tRNA + S-adenosyl-L-methionine = 5-methylaminomethyl-2-thiouridine(34) in tRNA + S-adenosyl-L-homocysteine + H(+). Its function is as follows. Catalyzes the last two steps in the biosynthesis of 5-methylaminomethyl-2-thiouridine (mnm(5)s(2)U) at the wobble position (U34) in tRNA. Catalyzes the FAD-dependent demodification of cmnm(5)s(2)U34 to nm(5)s(2)U34, followed by the transfer of a methyl group from S-adenosyl-L-methionine to nm(5)s(2)U34, to form mnm(5)s(2)U34. The protein is tRNA 5-methylaminomethyl-2-thiouridine biosynthesis bifunctional protein MnmC of Legionella pneumophila subsp. pneumophila (strain Philadelphia 1 / ATCC 33152 / DSM 7513).